The sequence spans 258 residues: Tryptophan synthase alpha chain (258 aa).

Active-site proton acceptor residues include Glu-46 and Asp-57.

It belongs to the TrpA family. As to quaternary structure, tetramer of two alpha and two beta chains.

The catalysed reaction is (1S,2R)-1-C-(indol-3-yl)glycerol 3-phosphate + L-serine = D-glyceraldehyde 3-phosphate + L-tryptophan + H2O. It functions in the pathway amino-acid biosynthesis; L-tryptophan biosynthesis; L-tryptophan from chorismate: step 5/5. The alpha subunit is responsible for the aldol cleavage of indoleglycerol phosphate to indole and glyceraldehyde 3-phosphate. This Phocaeicola vulgatus (strain ATCC 8482 / DSM 1447 / JCM 5826 / CCUG 4940 / NBRC 14291 / NCTC 11154) (Bacteroides vulgatus) protein is Tryptophan synthase alpha chain.